The sequence spans 217 residues: GrpE protein homolog 1, mitochondrial (217 aa).

The transit peptide at 1–27 directs the protein to the mitochondrion; that stretch reads MAARCVRLARGSLPAFALSLRSSPRLL. An N6-acetyllysine; alternate modification is found at Lys-94. Lys-94 carries the N6-succinyllysine; alternate modification. Lys-100 bears the N6-acetyllysine mark. Lys-120 is subject to N6-succinyllysine. Lys-215 is modified (N6-acetyllysine; alternate). Lys-215 carries the post-translational modification N6-succinyllysine; alternate.

Belongs to the GrpE family. In terms of assembly, probable component of the PAM complex at least composed of a mitochondrial HSP70 protein, GRPEL1 or GRPEL2, TIMM44, TIMM16/PAM16 and TIMM14/DNAJC19. Binds to HSP70, HSC70 and HSJ1B.

It localises to the mitochondrion matrix. Functionally, essential component of the PAM complex, a complex required for the translocation of transit peptide-containing proteins from the inner membrane into the mitochondrial matrix in an ATP-dependent manner. Seems to control the nucleotide-dependent binding of mitochondrial HSP70 to substrate proteins. In Bos taurus (Bovine), this protein is GrpE protein homolog 1, mitochondrial (GRPEL1).